The chain runs to 271 residues: ATP synthase subunit a (271 aa).

Transmembrane regions (helical) follow at residues 38 to 58, 100 to 120, 146 to 166, 220 to 240, and 242 to 262; these read FWTLNIDSMFFSVVLGLLFLV, LIAPLALTIFVWVFLMNLMDL, DVNITLSMALGVFILILFYSI, LIFILIAGLLPWWSQWILNVP, and AIFHILIITLQAFIFMVLTIV.

It belongs to the ATPase A chain family. As to quaternary structure, F-type ATPases have 2 components, CF(1) - the catalytic core - and CF(0) - the membrane proton channel. CF(1) has five subunits: alpha(3), beta(3), gamma(1), delta(1), epsilon(1). CF(0) has three main subunits: a(1), b(2) and c(9-12). The alpha and beta chains form an alternating ring which encloses part of the gamma chain. CF(1) is attached to CF(0) by a central stalk formed by the gamma and epsilon chains, while a peripheral stalk is formed by the delta and b chains.

The protein localises to the cell inner membrane. Its function is as follows. Key component of the proton channel; it plays a direct role in the translocation of protons across the membrane. The chain is ATP synthase subunit a from Salmonella arizonae (strain ATCC BAA-731 / CDC346-86 / RSK2980).